The primary structure comprises 531 residues: Beta-hexosaminidase subunit beta (531 aa).

Positions 1 to 21 (MEVLPGLLRLLAALVVAERWA) are cleaved as a signal peptide. Cys67 and Cys111 are disulfide-bonded. 3 N-linked (GlcNAc...) asparagine glycosylation sites follow: Asn120, Asn164, and Asn301. 2 disulfides stabilise this stretch: Cys283-Cys334 and Cys508-Cys525. Glu329 acts as the Proton donor in catalysis.

It belongs to the glycosyl hydrolase 20 family. There are 3 forms of beta-hexosaminidase: hexosaminidase A is a heterodimer composed of one subunit alpha and one subunit beta (chain A and B); hexosaminidase B is a homodimer of two beta subunits (two chains A and B); hexosaminidase S is a homodimer of two alpha subunits. The composition of the dimer (isozyme A versus isozyme S) has a significant effect on the substrate specificity of the alpha subunit active site.

It is found in the lysosome. The protein resides in the cytoplasmic vesicle. Its subcellular location is the secretory vesicle. It localises to the cortical granule. It catalyses the reaction Hydrolysis of terminal non-reducing N-acetyl-D-hexosamine residues in N-acetyl-beta-D-hexosaminides.. The catalysed reaction is N-acetyl-beta-D-galactosaminyl-(1-&gt;4)-beta-D-3-sulfogalactosyl-(1-&gt;4)-beta-D-glucosyl-(1&lt;-&gt;1')-ceramide + H2O = a beta-D-3-sulfogalactosyl-(1-&gt;4)-beta-D-glucosyl-(1&lt;-&gt;1')-ceramide + N-acetyl-beta-D-galactosamine. The enzyme catalyses a ganglioside GM2 (d18:1(4E)) + H2O = a ganglioside GM3 (d18:1(4E)) + N-acetyl-beta-D-galactosamine. It carries out the reaction a ganglioside GM2 + H2O = a ganglioside GM3 + N-acetyl-beta-D-galactosamine. It catalyses the reaction beta-D-GalNAc-(1-&gt;4)-alpha-L-IdoA-(1-&gt;3)-beta-D-GalNAc-4-sulfate-(1-&gt;4)-alpha-L-IdoA-(1-&gt;3)-D-GalNAc-4-sulfate + H2O = alpha-L-IdoA-(1-&gt;3)-beta-D-GalNAc-4-sulfate-(1-&gt;4)-alpha-L-IdoA-(1-&gt;3)-D-GalNAc-4-sulfate + N-acetyl-D-galactosamine. The catalysed reaction is N-acetyl-beta-D-6-sulfogalactosaminyl-(1-&gt;4)-alpha-L-iduronyl-(1-&gt;3)-N-acetyl-D-6-sulfogalactosamine + H2O = alpha-L-iduronyl-(1-&gt;3)-N-acetyl-D-6-sulfogalactosamine + N-acetyl-D-6-sulfogalactosamine. Its activity is regulated as follows. Addition of GM2A stimulates the hydrolysis of sulfated glycosphingolipid SM2 and the ganglioside GM2. Its function is as follows. Hydrolyzes the non-reducing end N-acetyl-D-hexosamine and/or sulfated N-acetyl-D-hexosamine of glycoconjugates, such as the oligosaccharide moieties from proteins and neutral glycolipids, or from certain mucopolysaccharides. The isozyme B does not hydrolyze each of these substrates, however hydrolyzes efficiently neutral oligosaccharide. Only the isozyme A is responsible for the degradation of GM2 gangliosides in the presence of GM2A. During fertilization is responsible, at least in part, for the zona block to polyspermy. Present in the cortical granules of non-activated oocytes, is exocytosed during the cortical reaction in response to oocyte activation and inactivates the sperm galactosyltransferase-binding site, accounting for the block in sperm binding to the zona pellucida. This is Beta-hexosaminidase subunit beta from Sus scrofa (Pig).